We begin with the raw amino-acid sequence, 345 residues long: NADH-ubiquinone oxidoreductase chain 2 (345 aa).

10 helical membrane-spanning segments follow: residues 3–23 (PYILSIMLISLGLGTTLTFAS), 25–45 (NWLLAWMGLEINTLAIIPLMA), 59–79 (YFITQAAAAALLLFSSLINAW), 95–115 (ALMTIAIAIKLGVAPVHFWLP), 148–168 (LMPELMIALGLMSTIVGGWGG), 177–196 (IMAYSSIAHLGWIISIMHFM), 201–223 (IINLIMYIIMTTTMFMIFNTLNS), 236–256 (FPALSAITMLALLSLGGLPPL), 273–293 (NLALTATVMALSALLSLYFYL), and 322–342 (FILPTMMIMTIAMLPISPSII).

This sequence belongs to the complex I subunit 2 family.

It is found in the mitochondrion inner membrane. The enzyme catalyses a ubiquinone + NADH + 5 H(+)(in) = a ubiquinol + NAD(+) + 4 H(+)(out). Functionally, core subunit of the mitochondrial membrane respiratory chain NADH dehydrogenase (Complex I) that is believed to belong to the minimal assembly required for catalysis. Complex I functions in the transfer of electrons from NADH to the respiratory chain. The immediate electron acceptor for the enzyme is believed to be ubiquinone. The polypeptide is NADH-ubiquinone oxidoreductase chain 2 (MT-ND2) (Polypterus ornatipinnis (Ornate bichir)).